Consider the following 248-residue polypeptide: ATP synthase subunit a, chloroplastic (248 aa).

The next 5 helical transmembrane spans lie at 38 to 58 (QVLLTSWFVLAVLLGLAVLTV), 96 to 116 (VPFIGTLFLFIFVSNWSGALV), 135 to 155 (INTTVALALLTSVAYFYAGLA), 200 to 220 (LVVAVLVSLVPLVVPIPVMLL), and 221 to 241 (GLFTSGIQALIFATLAAAYIG).

The protein belongs to the ATPase A chain family. F-type ATPases have 2 components, CF(1) - the catalytic core - and CF(0) - the membrane proton channel. CF(1) has five subunits: alpha(3), beta(3), gamma(1), delta(1), epsilon(1). CF(0) has four main subunits: a, b, b' and c.

Its subcellular location is the plastid. The protein localises to the chloroplast thylakoid membrane. Key component of the proton channel; it plays a direct role in the translocation of protons across the membrane. The sequence is that of ATP synthase subunit a, chloroplastic from Welwitschia mirabilis (Tree tumbo).